The chain runs to 1104 residues: Carbamoyl phosphate synthase large chain (1104 aa).

Residues 1 to 403 form a carboxyphosphate synthetic domain region; it reads MPRRQDIQKI…SFQKALRSLE (403 aa). Residues Arg129, Arg170, Gly176, Gly177, Gln209, Leu211, Glu216, Gly242, Ile243, His244, Gln286, and Glu300 each contribute to the ATP site. Residues 133–329 enclose the ATP-grasp 1 domain; it reads NEAMDKIGVK…IAKMAAKLAV (197 aa). The Mg(2+) site is built by Gln286, Glu300, and Asn302. Positions 286, 300, and 302 each coordinate Mn(2+). Residues 404 to 552 form an oligomerization domain region; the sequence is TGRAGWGCDK…YSTYEEETEV (149 aa). Residues 553-966 are carbamoyl phosphate synthetic domain; the sequence is IPASKPKVMI…AFAKAELGAG (414 aa). The region spanning 703-900 is the ATP-grasp 2 domain; that stretch reads EKILQKLNIS…LAKLASLIMS (198 aa). ATP is bound by residues Arg739, Lys778, Leu780, Glu785, Gly811, Ile812, His813, Ser814, Gln854, and Glu871. Gln854, Glu871, and Asn873 together coordinate Mg(2+). Mn(2+) contacts are provided by Gln854, Glu871, and Asn873. An MGS-like domain is found at 967–1104; that stretch reads ERLPLTGTVF…KTIQEYCPNF (138 aa). The segment at 967–1104 is allosteric domain; that stretch reads ERLPLTGTVF…KTIQEYCPNF (138 aa).

Belongs to the CarB family. Composed of two chains; the small (or glutamine) chain promotes the hydrolysis of glutamine to ammonia, which is used by the large (or ammonia) chain to synthesize carbamoyl phosphate. Tetramer of heterodimers (alpha,beta)4. Mg(2+) serves as cofactor. The cofactor is Mn(2+).

The catalysed reaction is hydrogencarbonate + L-glutamine + 2 ATP + H2O = carbamoyl phosphate + L-glutamate + 2 ADP + phosphate + 2 H(+). It carries out the reaction hydrogencarbonate + NH4(+) + 2 ATP = carbamoyl phosphate + 2 ADP + phosphate + 2 H(+). It participates in amino-acid biosynthesis; L-arginine biosynthesis; carbamoyl phosphate from bicarbonate: step 1/1. It functions in the pathway pyrimidine metabolism; UMP biosynthesis via de novo pathway; (S)-dihydroorotate from bicarbonate: step 1/3. Functionally, large subunit of the glutamine-dependent carbamoyl phosphate synthetase (CPSase). CPSase catalyzes the formation of carbamoyl phosphate from the ammonia moiety of glutamine, carbonate, and phosphate donated by ATP, constituting the first step of 2 biosynthetic pathways, one leading to arginine and/or urea and the other to pyrimidine nucleotides. The large subunit (synthetase) binds the substrates ammonia (free or transferred from glutamine from the small subunit), hydrogencarbonate and ATP and carries out an ATP-coupled ligase reaction, activating hydrogencarbonate by forming carboxy phosphate which reacts with ammonia to form carbamoyl phosphate. The polypeptide is Carbamoyl phosphate synthase large chain (Nostoc sp. (strain PCC 7120 / SAG 25.82 / UTEX 2576)).